Consider the following 446-residue polypeptide: tRNA modification GTPase MnmE (446 aa).

The (6S)-5-formyl-5,6,7,8-tetrahydrofolate site is built by arginine 22, glutamate 80, and lysine 119. Residues 215-370 (GLSLVIAGRP…LKKVIKQVVG (156 aa)) enclose the TrmE-type G domain. K(+) is bound at residue asparagine 225. GTP contacts are provided by residues 225-230 (NAGKST), 244-250 (TEIAGTT), and 269-272 (DTAG). Serine 229 lines the Mg(2+) pocket. Positions 244, 246, and 249 each coordinate K(+). Mg(2+) is bound at residue threonine 250. (6S)-5-formyl-5,6,7,8-tetrahydrofolate is bound at residue lysine 446.

This sequence belongs to the TRAFAC class TrmE-Era-EngA-EngB-Septin-like GTPase superfamily. TrmE GTPase family. Homodimer. Heterotetramer of two MnmE and two MnmG subunits. The cofactor is K(+).

The protein localises to the cytoplasm. Exhibits a very high intrinsic GTPase hydrolysis rate. Involved in the addition of a carboxymethylaminomethyl (cmnm) group at the wobble position (U34) of certain tRNAs, forming tRNA-cmnm(5)s(2)U34. The sequence is that of tRNA modification GTPase MnmE from Legionella pneumophila (strain Paris).